The chain runs to 815 residues: Chromatin assembly factor 1 subunit FAS1 (815 aa).

Disordered regions lie at residues 1-39 (MDEV…TSEE), 292-330 (NNKE…KKQL), 434-477 (KLST…KKSR), 502-577 (QVVK…EGVQ), and 791-815 (RCLP…NENA). Basic and acidic residues-rich tracts occupy residues 10 to 21 (NENRKTMIEPKK) and 292 to 328 (NNKE…ELKK). Residues 244–336 (EEKLLLKQLE…KKQLQVQKQA (93 aa)) are a coiled coil. Acidic residues-rich tracts occupy residues 516-532 (LDYE…EEAG) and 554-576 (DDED…DEGV). Residues 806 to 815 (AAERLENENA) show a composition bias toward basic and acidic residues.

It belongs to the CHAF1A family. In terms of assembly, component of the chromatin assembly factor 1 (CAF-1) complex, composed of FAS1, FAS2 and MSI1. Interacts with CYP71. Expressed in the shoot apical meristem, young leaf primordia, root tip and first lateral root primordium at the hypocotyl/root junction.

The protein resides in the nucleus. In terms of biological role, component of the chromatin assembly factor complex (CAF-1) involved in chromatin assembly following DNA replication and DNA repair. Assembles histone octamers onto replicating DNA in vitro. Required for several aspects of development, including seedling growth and leaf hair differentiation. Plays a critical role in the organization of shoot apical meristem (SAM) and root apical meristem (RAM) during postembryonic development by facilitating stable maintenance of gene expression states. Seems not required to maintain transcriptional repression of heterochromatic genes. Involved in heterologous recombination. May repress endocycle. The chain is Chromatin assembly factor 1 subunit FAS1 (FAS1) from Arabidopsis thaliana (Mouse-ear cress).